We begin with the raw amino-acid sequence, 217 residues long: 3,4-dihydroxy-2-butanone 4-phosphate synthase (217 aa).

Residues 37–38, aspartate 42, 150–154, and glutamate 174 contribute to the D-ribulose 5-phosphate site; these read RE and RGGHT. Glutamate 38 lines the Mg(2+) pocket. Residue histidine 153 participates in Mg(2+) binding.

It belongs to the DHBP synthase family. As to quaternary structure, homodimer. The cofactor is Mg(2+). It depends on Mn(2+) as a cofactor.

The catalysed reaction is D-ribulose 5-phosphate = (2S)-2-hydroxy-3-oxobutyl phosphate + formate + H(+). The protein operates within cofactor biosynthesis; riboflavin biosynthesis; 2-hydroxy-3-oxobutyl phosphate from D-ribulose 5-phosphate: step 1/1. Functionally, catalyzes the conversion of D-ribulose 5-phosphate to formate and 3,4-dihydroxy-2-butanone 4-phosphate. In Escherichia coli O17:K52:H18 (strain UMN026 / ExPEC), this protein is 3,4-dihydroxy-2-butanone 4-phosphate synthase.